Reading from the N-terminus, the 303-residue chain is Bifunctional protein FolD 2 (303 aa).

Residues 169 to 171, serine 194, and isoleucine 235 each bind NADP(+); that span reads GRS.

The protein belongs to the tetrahydrofolate dehydrogenase/cyclohydrolase family. As to quaternary structure, homodimer.

The enzyme catalyses (6R)-5,10-methylene-5,6,7,8-tetrahydrofolate + NADP(+) = (6R)-5,10-methenyltetrahydrofolate + NADPH. It catalyses the reaction (6R)-5,10-methenyltetrahydrofolate + H2O = (6R)-10-formyltetrahydrofolate + H(+). Its pathway is one-carbon metabolism; tetrahydrofolate interconversion. In terms of biological role, catalyzes the oxidation of 5,10-methylenetetrahydrofolate to 5,10-methenyltetrahydrofolate and then the hydrolysis of 5,10-methenyltetrahydrofolate to 10-formyltetrahydrofolate. This chain is Bifunctional protein FolD 2, found in Pseudomonas putida (strain GB-1).